Reading from the N-terminus, the 156-residue chain is MRSSAKQEELVKAFKALLKEEKFSSQGEIVQALQDQGFENINQSKVSRMLTKFGAVRTRNAKMEMVYCLPVELGVPTTSSPLKNLVLDIDYNDAVVVIHTSPGAAQLIARLLDSLGKAEGILGTIAGDDTIFTTPARGFTVKDLYEAILVLFEQEL.

This sequence belongs to the ArgR family.

The protein resides in the cytoplasm. It functions in the pathway amino-acid biosynthesis; L-arginine biosynthesis [regulation]. Functionally, regulates arginine biosynthesis genes. This Cronobacter sakazakii (strain ATCC BAA-894) (Enterobacter sakazakii) protein is Arginine repressor.